Consider the following 201-residue polypeptide: Putative ankyrin repeat protein YahD (201 aa).

ANK repeat units follow at residues Asn-5–Thr-34, Gln-38–Lys-67, Thr-71–Cys-100, Phe-104–Gln-134, Val-138–Leu-172, and Tyr-176–Ala-201.

This is Putative ankyrin repeat protein YahD (yahD) from Escherichia coli (strain K12).